Consider the following 174-residue polypeptide: 2-hydroxy-palmitic acid dioxygenase MPO1 (174 aa).

At 1–23 (MGEGLLDLRSQLGFYKFYHHNPK) the chain is on the cytoplasmic side. Residues 24–44 (NVLIHSIFVPTILFSGSCMLH) traverse the membrane as a helical segment. Residues 45–63 (RVKIYQSISLTAVLSVLFS) lie on the Lumenal side of the membrane. Residues 64 to 84 (IFYCLLYLPTGLLAGVLLLLL) form a helical membrane-spanning segment. Residues 85–98 (NLALIDHRVDLTFK) are Cytoplasmic-facing. A helical transmembrane segment spans residues 99–119 (QELGLFTIGWIFQFVGHGVFE). At 120-131 (KRRPALIDNLVQ) the chain is on the lumenal side. Residues 132-152 (SLVLAPYFIMFEFLFKLGFMP) form a helical membrane-spanning segment. Residues 153–174 (RLKATLEHDLEIKQRNLRMQRQ) are Cytoplasmic-facing.

The protein belongs to the MPO1 family. The cofactor is Fe(2+).

It is found in the endoplasmic reticulum membrane. The catalysed reaction is (R)-2-hydroxyhexadecanoate + O2 = pentadecanoate + CO2 + H2O. Functionally, dioxygenase that catalyzes the alpha-oxidation of 2-hydroxy fatty acids in an iron-dependent manner. Involved in metabolism of phytosphingosine and is required for proper endoplasmic reticulum stress response. This Saccharomyces cerevisiae (strain ATCC 204508 / S288c) (Baker's yeast) protein is 2-hydroxy-palmitic acid dioxygenase MPO1.